A 248-amino-acid chain; its full sequence is tRNA (guanine-N(1)-)-methyltransferase (248 aa).

Residues glycine 113 and isoleucine 133–leucine 138 contribute to the S-adenosyl-L-methionine site.

It belongs to the RNA methyltransferase TrmD family. As to quaternary structure, homodimer.

Its subcellular location is the cytoplasm. The catalysed reaction is guanosine(37) in tRNA + S-adenosyl-L-methionine = N(1)-methylguanosine(37) in tRNA + S-adenosyl-L-homocysteine + H(+). Its function is as follows. Specifically methylates guanosine-37 in various tRNAs. The chain is tRNA (guanine-N(1)-)-methyltransferase from Shewanella halifaxensis (strain HAW-EB4).